Consider the following 347-residue polypeptide: MKLAVFSAKSYDKHYFDATLRKHHPALCEITYHSFALSSETVSLAQDSDAVCVFVNDQLDAPVLETLYANGVRAILLRCAGFNNINLQVAEDLGFFVANVPSYSPEAVAEFAVALIQTLNRKTHRAFNRVREGNFNLEGFLGRTLYGKTVGVVGVGRIGLAFAKILHGFGCKLVAYDPFGGEEFKKYGEFVELGDLLAQSDVVSLHCPLTEGTRHVINDENLGRMKKGALLVNTSRGGLVNTKAVINALKSGQLGGVALDVYEEEGALFYNDHSGEIIHDDVLMRLMTFPNVLVCGHQAFFTEEALSEIAGVTLGNLEDFVLKRTCKNSLVREGHLVVPTDKEPVRL.

Residues 157-158 (RI), Asp-177, 234-236 (TSR), and Asp-260 contribute to the NAD(+) site. Arg-236 is an active-site residue. Glu-265 is a catalytic residue.

The protein belongs to the D-isomer specific 2-hydroxyacid dehydrogenase family.

It catalyses the reaction a (2R)-2-hydroxycarboxylate + NADP(+) = a 2-oxocarboxylate + NADPH + H(+). In terms of biological role, 2-hydroxyacid dehydrogenase that is capable to reduce pyruvate, hydroxypyruvate and glyoxylate in a NADPH- or NADH-dependent manner. In contrast to 2-HadhD/morA, does not recognize 4-methyl-2-oxopentanoate (MOA) as a substrate. This chain is 2-hydroxyacid dehydrogenase A, found in Aspergillus oryzae (strain ATCC 42149 / RIB 40) (Yellow koji mold).